The primary structure comprises 394 residues: Dual-specificity RNA methyltransferase RlmN (394 aa).

Glutamate 115 acts as the Proton acceptor in catalysis. Positions 121-363 constitute a Radical SAM core domain; the sequence is DEGRGTLCVS…SPIRTPRGED (243 aa). Cysteine 128 and cysteine 368 are oxidised to a cystine. [4Fe-4S] cluster-binding residues include cysteine 135, cysteine 139, and cysteine 142. Residues 194–195, serine 226, 248–250, and asparagine 325 contribute to the S-adenosyl-L-methionine site; these read GE and SFH. Cysteine 368 acts as the S-methylcysteine intermediate in catalysis.

It belongs to the radical SAM superfamily. RlmN family. It depends on [4Fe-4S] cluster as a cofactor.

It localises to the cytoplasm. It catalyses the reaction adenosine(2503) in 23S rRNA + 2 reduced [2Fe-2S]-[ferredoxin] + 2 S-adenosyl-L-methionine = 2-methyladenosine(2503) in 23S rRNA + 5'-deoxyadenosine + L-methionine + 2 oxidized [2Fe-2S]-[ferredoxin] + S-adenosyl-L-homocysteine. The catalysed reaction is adenosine(37) in tRNA + 2 reduced [2Fe-2S]-[ferredoxin] + 2 S-adenosyl-L-methionine = 2-methyladenosine(37) in tRNA + 5'-deoxyadenosine + L-methionine + 2 oxidized [2Fe-2S]-[ferredoxin] + S-adenosyl-L-homocysteine. In terms of biological role, specifically methylates position 2 of adenine 2503 in 23S rRNA and position 2 of adenine 37 in tRNAs. m2A2503 modification seems to play a crucial role in the proofreading step occurring at the peptidyl transferase center and thus would serve to optimize ribosomal fidelity. This is Dual-specificity RNA methyltransferase RlmN from Roseobacter denitrificans (strain ATCC 33942 / OCh 114) (Erythrobacter sp. (strain OCh 114)).